The primary structure comprises 404 residues: Argininosuccinate synthase (404 aa).

Residues 10–18 (AFSGGLDTS) and alanine 37 each bind ATP. Residues tyrosine 88 and serine 93 each contribute to the L-citrulline site. Glycine 118 lines the ATP pocket. Residues threonine 120, asparagine 124, and aspartate 125 each contribute to the L-aspartate site. Residue asparagine 124 participates in L-citrulline binding. 5 residues coordinate L-citrulline: arginine 128, serine 179, serine 188, glutamate 264, and tyrosine 276.

This sequence belongs to the argininosuccinate synthase family. Type 1 subfamily. As to quaternary structure, homotetramer.

It is found in the cytoplasm. The enzyme catalyses L-citrulline + L-aspartate + ATP = 2-(N(omega)-L-arginino)succinate + AMP + diphosphate + H(+). It participates in amino-acid biosynthesis; L-arginine biosynthesis; L-arginine from L-ornithine and carbamoyl phosphate: step 2/3. The chain is Argininosuccinate synthase from Nitrosomonas eutropha (strain DSM 101675 / C91 / Nm57).